Consider the following 436-residue polypeptide: Proteasome-activating nucleotidase (436 aa).

Positions 15 to 97 form a coiled coil; the sequence is EELCRLYRSL…LKSESEQLRS (83 aa). ATP contacts are provided by residues 222–227 and H361; that span reads GTGKTL. The tract at residues 434-436 is docks into pockets in the proteasome alpha-ring to cause gate opening; sequence MFA.

The protein belongs to the AAA ATPase family. As to quaternary structure, homohexamer. The hexameric complex has a two-ring architecture resembling a top hat that caps the 20S proteasome core at one or both ends. Upon ATP-binding, the C-terminus of PAN interacts with the alpha-rings of the proteasome core by binding to the intersubunit pockets.

Its subcellular location is the cytoplasm. Functionally, ATPase which is responsible for recognizing, binding, unfolding and translocation of substrate proteins into the archaeal 20S proteasome core particle. Is essential for opening the gate of the 20S proteasome via an interaction with its C-terminus, thereby allowing substrate entry and access to the site of proteolysis. Thus, the C-termini of the proteasomal ATPase function like a 'key in a lock' to induce gate opening and therefore regulate proteolysis. Unfolding activity requires energy from ATP hydrolysis, whereas ATP binding alone promotes ATPase-20S proteasome association which triggers gate opening, and supports translocation of unfolded substrates. This is Proteasome-activating nucleotidase from Methanoregula boonei (strain DSM 21154 / JCM 14090 / 6A8).